A 344-amino-acid polypeptide reads, in one-letter code: Putative cyclin-Y-like protein 3 (344 aa).

The region spanning 40–170 (ERYANRSLAI…FLELLEFNIH (131 aa)) is the Cyclin N-terminal domain.

The protein belongs to the cyclin family. Cyclin Y subfamily.

In Homo sapiens (Human), this protein is Putative cyclin-Y-like protein 3 (CCNYL3).